Here is a 611-residue protein sequence, read N- to C-terminus: Probable inactive purple acid phosphatase 27 (611 aa).

A signal peptide spans 1-18 (MARNFLLVLLWFIVQVSS). Residues Asn-263 and Asn-271 are each glycosylated (N-linked (GlcNAc...) asparagine). Position 293 (Asp-293) interacts with Fe cation. Asn-314 is a glycosylation site (N-linked (GlcNAc...) asparagine). Residues Asp-334 and Tyr-337 each coordinate Fe cation. Residue Asp-334 participates in Zn(2+) binding. The Zn(2+) site is built by Asn-367, His-456, and His-498. Residue Asn-367 coordinates substrate. 498 to 500 (HVH) is a binding site for substrate. A Fe cation-binding site is contributed by His-500.

This sequence belongs to the metallophosphoesterase superfamily. Purple acid phosphatase family. As to quaternary structure, homodimer. The cofactor is Fe cation. Zn(2+) is required as a cofactor. In terms of tissue distribution, expressed in roots, stems, leaves, flowers and siliques.

It localises to the secreted. The sequence is that of Probable inactive purple acid phosphatase 27 (PAP27) from Arabidopsis thaliana (Mouse-ear cress).